The sequence spans 472 residues: Eukaryotic translation initiation factor 2 subunit 3 (472 aa).

The residue at position 2 (Ala-2) is an N-acetylalanine. Residue Ser-16 is modified to Phosphoserine. A tr-type G domain is found at Gln-39–Arg-248. The segment at Gly-48 to Ser-55 is G1. Ala-51–Thr-56 provides a ligand contact to GTP. Residues Asn-76–Lys-80 are G2. The interval Asp-134 to Gly-137 is G3. Residues Asn-190 to Asp-193 and Ser-225 to Gln-227 each bind GTP. A G4 region spans residues Asn-190 to Asp-193. The segment at Ser-225–Gln-227 is G5. The segment at Gly-457–Val-469 is interacts with CDC123.

This sequence belongs to the TRAFAC class translation factor GTPase superfamily. Classic translation factor GTPase family. EIF2G subfamily. As to quaternary structure, eukaryotic translation initiation factor 2 eIF2 is a heterotrimeric complex composed of an alpha (EIF2S1), a beta (EIF2S2) and a gamma (EIF2S3) chain. eIF2 is member of the 43S pre-initiation complex (43S PIC). Interacts (via C-terminus) with CDC123; the interaction is direct.

It is found in the cytoplasm. The protein localises to the cytosol. It catalyses the reaction GTP + H2O = GDP + phosphate + H(+). In terms of biological role, member of the eIF2 complex that functions in the early steps of protein synthesis by forming a ternary complex with GTP and initiator tRNA. This complex binds to a 40S ribosomal subunit, followed by mRNA binding to form the 43S pre-initiation complex (43S PIC). Junction of the 60S ribosomal subunit to form the 80S initiation complex is preceded by hydrolysis of the GTP bound to eIF2 and release of an eIF2-GDP binary complex. In order for eIF2 to recycle and catalyze another round of initiation, the GDP bound to eIF2 must exchange with GTP by way of a reaction catalyzed by eIF-2B. The polypeptide is Eukaryotic translation initiation factor 2 subunit 3 (EIF2S3) (Sus scrofa (Pig)).